A 1454-amino-acid polypeptide reads, in one-letter code: Mediator of RNA polymerase II transcription subunit 14 (1454 aa).

The segment at 1 to 34 (MAPVQLENHQLVPPGGGGGGSGGPPSAPAPPPPG) is disordered. Gly residues predominate over residues 14–23 (PGGGGGGSGG). A compositionally biased stretch (pro residues) spans 25 to 34 (PSAPAPPPPG). Positions 69-73 (LTDLL) match the LXXLL motif 1 motif. The interval 188 to 566 (KQATLHQLNQ…VPNKPTQLSY (379 aa)) is interaction with STAT2. The segment at 500-824 (LGQQRCKQSI…TKGSSISIQW (325 aa)) is interaction with SREBF1. Serine 617 and serine 986 each carry phosphoserine. Residues 973–1167 (ARRRSVNEDD…MPPPRKLPQR (195 aa)) form a disordered region. Pro residues predominate over residues 1001–1011 (QPPPQQQPFPK). 2 stretches are compositionally biased toward polar residues: residues 1024–1054 (PPTS…SSPS) and 1092–1101 (DPSSPYTMVS). Phosphoserine occurs at positions 1112, 1119, 1128, 1136, and 1144. The segment covering 1147–1156 (AGTSSQTMPT) has biased composition (polar residues). The short motif at 1182 to 1186 (LNILL) is the LXXLL motif 2 element.

The protein belongs to the Mediator complex subunit 14 family. In terms of assembly, interacts with GATA1. Component of the Mediator complex, which is composed of MED1, MED4, MED6, MED7, MED8, MED9, MED10, MED11, MED12, MED13, MED13L, MED14, MED15, MED16, MED17, MED18, MED19, MED20, MED21, MED22, MED23, MED24, MED25, MED26, MED27, MED29, MED30, MED31, CCNC, CDK8 and CDC2L6/CDK11. The MED12, MED13, CCNC and CDK8 subunits form a distinct module termed the CDK8 module. Mediator containing the CDK8 module is less active than Mediator lacking this module in supporting transcriptional activation. Individual preparations of the Mediator complex lacking one or more distinct subunits have been variously termed ARC, CRSP, DRIP, PC2, SMCC and TRAP. Interacts with AR, ESR1, SREBF1 and STAT2. As to expression, ubiquitous.

It is found in the nucleus. Functionally, component of the Mediator complex, a coactivator involved in the regulated transcription of nearly all RNA polymerase II-dependent genes. Mediator functions as a bridge to convey information from gene-specific regulatory proteins to the basal RNA polymerase II transcription machinery. Mediator is recruited to promoters by direct interactions with regulatory proteins and serves as a scaffold for the assembly of a functional preinitiation complex with RNA polymerase II and the general transcription factors. The chain is Mediator of RNA polymerase II transcription subunit 14 (MED14) from Homo sapiens (Human).